A 388-amino-acid polypeptide reads, in one-letter code: Succinate--CoA ligase [ADP-forming] subunit beta (388 aa).

Positions 9–246 constitute an ATP-grasp domain; sequence KDILRQFGVP…FEEEDPAEVL (238 aa). ATP contacts are provided by residues K46, 53–55, E99, A102, and E107; that span reads GRG. Residues N201 and D215 each coordinate Mg(2+). Residues N266 and 323–325 each bind substrate; that span reads GIM.

It belongs to the succinate/malate CoA ligase beta subunit family. Heterotetramer of two alpha and two beta subunits. The cofactor is Mg(2+).

It catalyses the reaction succinate + ATP + CoA = succinyl-CoA + ADP + phosphate. It carries out the reaction GTP + succinate + CoA = succinyl-CoA + GDP + phosphate. The protein operates within carbohydrate metabolism; tricarboxylic acid cycle; succinate from succinyl-CoA (ligase route): step 1/1. Its function is as follows. Succinyl-CoA synthetase functions in the citric acid cycle (TCA), coupling the hydrolysis of succinyl-CoA to the synthesis of either ATP or GTP and thus represents the only step of substrate-level phosphorylation in the TCA. The beta subunit provides nucleotide specificity of the enzyme and binds the substrate succinate, while the binding sites for coenzyme A and phosphate are found in the alpha subunit. This is Succinate--CoA ligase [ADP-forming] subunit beta from Verminephrobacter eiseniae (strain EF01-2).